We begin with the raw amino-acid sequence, 393 residues long: tRNA(Met) cytidine acetate ligase (393 aa).

Residues Gly81, Asn142, and Arg167 each contribute to the ATP site.

This sequence belongs to the TmcAL family.

Its subcellular location is the cytoplasm. The catalysed reaction is cytidine(34) in elongator tRNA(Met) + acetate + ATP = N(4)-acetylcytidine(34) in elongator tRNA(Met) + AMP + diphosphate. Its function is as follows. Catalyzes the formation of N(4)-acetylcytidine (ac(4)C) at the wobble position of elongator tRNA(Met), using acetate and ATP as substrates. First activates an acetate ion to form acetyladenylate (Ac-AMP) and then transfers the acetyl group to tRNA to form ac(4)C34. This chain is tRNA(Met) cytidine acetate ligase, found in Bacillus cytotoxicus (strain DSM 22905 / CIP 110041 / 391-98 / NVH 391-98).